The sequence spans 482 residues: Zinc finger protein 223 (482 aa).

The KRAB domain occupies 8–78; it reads VTFKDVAVVF…DIATQREGNS (71 aa). 5 consecutive C2H2-type zinc fingers follow at residues 176–198, 204–226, 232–254, 260–282, and 288–310; these read HSCDECGKSFCYISALHIHQRVH, FKCDVCGKEFSQSLHLQTHQRVH, FKCEQCGRGFRCRSALTVHCKLH, YNCEACGRAFIHDFQLQKHQRIH, and FKCEICSVSFRLRSSLNRHCVVH. The segment at 316 to 338 adopts a C2H2-type 6; degenerate zinc-finger fold; sequence NSTGEYGKGFIRRLDLCKHQTIH. 3 C2H2-type zinc fingers span residues 344–366, 372–394, and 400–422; these read YNCKECGKSFRRSSYLLIHQRVH, YKCDKCGKSYITKSGLDLHHRAH, and YNCDDCGKSFRQASSILNHKRLH. A C2H2-type 10; degenerate zinc finger spans residues 428–450; it reads FKCEDCGKKLVYRSYRKDQQKNH.

Belongs to the krueppel C2H2-type zinc-finger protein family.

It is found in the nucleus. In terms of biological role, may be involved in transcriptional regulation. This is Zinc finger protein 223 (ZNF223) from Homo sapiens (Human).